A 187-amino-acid chain; its full sequence is Prepilin peptidase-dependent protein B (187 aa).

A propeptide spans 1 to 7 (MPVKEQG) (leader sequence). Phenylalanine 8 carries the N-methylphenylalanine modification. A helical transmembrane segment spans residues 8-28 (FSLLEVLIAMAISSVLLLGAA).

It localises to the membrane. Its function is as follows. Not yet known. The polypeptide is Prepilin peptidase-dependent protein B (ppdB) (Escherichia coli (strain K12)).